The sequence spans 249 residues: Inhibitor of growth protein 4 (249 aa).

A coiled-coil region spans residues 25–118; sequence FQLMRDLDQR…ADLKEKQIES (94 aa). The disordered stretch occupies residues 115-160; the sequence is QIESSDYDSSSSKGKKKGRAQKEKKAARARSKGKNSDEEAPKTAQK. The PHD-type zinc-finger motif lies at 196–245; sequence PTYCLCHQVSYGEMIGCDNPDCSIEWFHFACVGLTTKPRGKWFCPRCSQE. Zn(2+)-binding residues include C199, C201, C212, C217, H223, C226, C239, and C242.

This sequence belongs to the ING family. Homodimer. Component of the HBO1 complex.

The protein resides in the nucleus. In terms of biological role, component of HBO1 complexes, which specifically mediate acetylation of histone H3 at 'Lys-14' (H3K14ac), and have reduced activity toward histone H4. Through chromatin acetylation it may function in DNA replication. The sequence is that of Inhibitor of growth protein 4 (ING4) from Gallus gallus (Chicken).